A 774-amino-acid chain; its full sequence is Lon protease 2 (774 aa).

One can recognise a Lon N-terminal domain in the interval 5–198 (YPLMPLRDIV…LLLEILFREL (194 aa)). Residue 350–357 (GPPGVGKT) coordinates ATP. The Lon proteolytic domain maps to 588–769 (RDEVGLATGL…DQVLEQALLS (182 aa)). Residues S675 and K718 contribute to the active site.

This sequence belongs to the peptidase S16 family. In terms of assembly, homohexamer. Organized in a ring with a central cavity.

It is found in the cytoplasm. It catalyses the reaction Hydrolysis of proteins in presence of ATP.. Functionally, ATP-dependent serine protease that mediates the selective degradation of mutant and abnormal proteins as well as certain short-lived regulatory proteins. Required for cellular homeostasis and for survival from DNA damage and developmental changes induced by stress. Degrades polypeptides processively to yield small peptide fragments that are 5 to 10 amino acids long. Binds to DNA in a double-stranded, site-specific manner. This is Lon protease 2 from Desulfotalea psychrophila (strain LSv54 / DSM 12343).